The chain runs to 848 residues: MENQNTKKPLVNVKALSMMFKVRGTLFKALDEIGFTVNEGDFFGVIGESGSGKSTTGKCLIRLNIPSGGKIEIANHLLSGKKLTKENNQWLKQNIQMVFQDPYSSINPTKNVLTVISEPLVISKTVFGETKQYLKSLQKLSFKVKKTLLRNDIELETKFHNNFFKTVIKQINESLFNFEDLDYKDLKPSHLRQRIINETDKFIEKIRSEFALFYDFYANQSVPLQKALDDANSSLTPSSVIELKNQLKALQKQAKISKAAWDILQALKQNQKELKDYENYVHFELQKKPRIYLNTWLLTTKSYIKDSKQNMQLTDDIFAFSYNSMVDKKRNLVLILSKYYKLLPYFYDQSVFDNADQFDEIANLIFFDLVETLLGVTSLFNDALAADKVPLIKFAKFLNKLCDLRFLTLKKSFKKTRVSCSFSFNSEPEILFANSCYDLQQMPQIIKPFWEKLFNEQNYQKIIDSVSRLNVMIANYITKAFEIKKTIDEKLREFKQQNLALKKAYSANKKSEANKASINELKVNLKTLKKQLKQEKNTTKKQSKKELKPLLKEHHTALKLHDEFNHDLRKWFKKLNFMVKKYNRLENSQKKFCLVKKLKALFKKQDETLQSELRPKLKTFGVINFEYKRAVKESNVFRLVHFAKNIFKPFLFFNLTKIFMRNKVYEALDSVGLKREHAYRYPHEFSGGQRQRIAIARALITKPKLIIADELISALDVSIQAQVINILKDLAKKHNLTVLFIAHDLSMVQTVCNRLIIMHRGKIVERGSVDEIFSNPVHPYTRSLIKASPKLSKINVDLASFDENFTYDSDYSLTNMPFYIKVPNSEEHELYCTQKQFDSWIKEATPIN.

Residues 13-785 (VKALSMMFKV…PVHPYTRSLI (773 aa)) form the ABC transporter domain. An ATP-binding site is contributed by 47-54 (GESGSGKS).

It belongs to the ABC transporter superfamily. The complex is composed of two ATP-binding proteins (OppD and OppF), two transmembrane proteins (OppB and OppC) and a solute-binding protein (OppA).

The protein resides in the cell membrane. It catalyses the reaction a [peptide](out) + ATP + H2O = a [peptide](in) + ADP + phosphate + H(+). In terms of biological role, part of the ABC transporter complex OppABCDF involved in the uptake of oligopeptides. Probably responsible for energy coupling to the transport system. The sequence is that of Oligopeptide transport ATP-binding protein OppF (oppF) from Mycoplasma genitalium (strain ATCC 33530 / DSM 19775 / NCTC 10195 / G37) (Mycoplasmoides genitalium).